Reading from the N-terminus, the 106-residue chain is Nucleoid-associated protein Abu_0429 (106 aa).

This sequence belongs to the YbaB/EbfC family. Homodimer.

It localises to the cytoplasm. The protein resides in the nucleoid. Functionally, binds to DNA and alters its conformation. May be involved in regulation of gene expression, nucleoid organization and DNA protection. In Aliarcobacter butzleri (strain RM4018) (Arcobacter butzleri), this protein is Nucleoid-associated protein Abu_0429.